Reading from the N-terminus, the 261-residue chain is Triosephosphate isomerase (261 aa).

10 to 12 (NWK) provides a ligand contact to substrate. Catalysis depends on His-100, which acts as the Electrophile. Glu-172 acts as the Proton acceptor in catalysis. Substrate-binding positions include Gly-178, Ser-218, and 239 to 240 (GG).

The protein belongs to the triosephosphate isomerase family. In terms of assembly, homodimer.

Its subcellular location is the cytoplasm. It carries out the reaction D-glyceraldehyde 3-phosphate = dihydroxyacetone phosphate. It participates in carbohydrate biosynthesis; gluconeogenesis. Its pathway is carbohydrate degradation; glycolysis; D-glyceraldehyde 3-phosphate from glycerone phosphate: step 1/1. Its function is as follows. Involved in the gluconeogenesis. Catalyzes stereospecifically the conversion of dihydroxyacetone phosphate (DHAP) to D-glyceraldehyde-3-phosphate (G3P). This chain is Triosephosphate isomerase, found in Mycobacterium avium (strain 104).